The chain runs to 312 residues: Olfactory receptor 6C74 (312 aa).

At methionine 1–valine 23 the chain is on the extracellular side. Asparagine 3 carries N-linked (GlcNAc...) asparagine glycosylation. A helical transmembrane segment spans residues isoleucine 24–isoleucine 44. The Cytoplasmic segment spans residues threonine 45–asparagine 63. A helical transmembrane segment spans residues phenylalanine 64–alanine 84. Over threonine 85–cysteine 95 the chain is Extracellular. Cysteine 95 and cysteine 177 form a disulfide bridge. A helical transmembrane segment spans residues alanine 96–methionine 116. Over serine 117–serine 140 the chain is Cytoplasmic. A helical transmembrane segment spans residues leucine 141–glycine 161. The Extracellular segment spans residues leucine 162–glutamate 194. A helical membrane pass occupies residues leucine 195–serine 215. The Cytoplasmic portion of the chain corresponds to tyrosine 216–serine 237. Residues threonine 238–valine 258 form a helical membrane-spanning segment. Residues lysine 259–asparagine 269 lie on the Extracellular side of the membrane. Residues lysine 270–leucine 290 form a helical membrane-spanning segment. At arginine 291 to lysine 312 the chain is on the cytoplasmic side.

Belongs to the G-protein coupled receptor 1 family.

The protein resides in the cell membrane. Odorant receptor. The protein is Olfactory receptor 6C74 (OR6C74) of Homo sapiens (Human).